Reading from the N-terminus, the 389-residue chain is Very-long-chain 3-oxoacyl-CoA reductase (389 aa).

Residues 34-54 traverse the membrane as a helical segment; that stretch reads IAVFLLAIGLFHVALKVVSYV. Residues V80, D134, N162, Y239, K243, V272, and S274 each contribute to the NADP(+) site. Y239 acts as the Proton donor in catalysis. The active-site Lowers pKa of active site Tyr is K243. The disordered stretch occupies residues 359-389; sequence QAAGGVADPKNTTAAREGYATESLKNETLKH.

This sequence belongs to the short-chain dehydrogenases/reductases (SDR) family.

Its subcellular location is the endoplasmic reticulum membrane. It catalyses the reaction a very-long-chain (3R)-3-hydroxyacyl-CoA + NADP(+) = a very-long-chain 3-oxoacyl-CoA + NADPH + H(+). Its pathway is lipid metabolism; fatty acid biosynthesis. Functionally, component of the microsomal membrane bound fatty acid elongation system, which produces the 26-carbon very long-chain fatty acids (VLCFA) from palmitate. Catalyzes the reduction of the 3-ketoacyl-CoA intermediate that is formed in each cycle of fatty acid elongation. VLCFAs serve as precursors for ceramide and sphingolipids. This Yarrowia lipolytica (strain CLIB 122 / E 150) (Yeast) protein is Very-long-chain 3-oxoacyl-CoA reductase.